The primary structure comprises 523 residues: 2-isopropylmalate synthase (523 aa).

The Pyruvate carboxyltransferase domain maps to 5 to 267; that stretch reads VVIFDTTLRD…QTRINHNEIW (263 aa). Residues D14, H202, H204, and N238 each coordinate Mn(2+). Positions 392–523 are regulatory domain; that stretch reads RMDYFSVQSG…QNKENNKETV (132 aa).

This sequence belongs to the alpha-IPM synthase/homocitrate synthase family. LeuA type 1 subfamily. As to quaternary structure, homodimer. Mn(2+) is required as a cofactor.

The protein resides in the cytoplasm. It catalyses the reaction 3-methyl-2-oxobutanoate + acetyl-CoA + H2O = (2S)-2-isopropylmalate + CoA + H(+). The protein operates within amino-acid biosynthesis; L-leucine biosynthesis; L-leucine from 3-methyl-2-oxobutanoate: step 1/4. In terms of biological role, catalyzes the condensation of the acetyl group of acetyl-CoA with 3-methyl-2-oxobutanoate (2-ketoisovalerate) to form 3-carboxy-3-hydroxy-4-methylpentanoate (2-isopropylmalate). In Enterobacter sp. (strain 638), this protein is 2-isopropylmalate synthase.